Here is a 669-residue protein sequence, read N- to C-terminus: Soluble guanylate cyclase 89Db (669 aa).

Residue histidine 104 participates in heme binding. A coiled-coil region spans residues 430 to 458; the sequence is QHCSKLEIMFEKEEQRSDELEKSLELADS. The region spanning 494-620 is the Guanylate cyclase domain; that stretch reads SVIFIEVMNI…DTVNTASRME (127 aa).

Belongs to the adenylyl cyclase class-4/guanylyl cyclase family. Heterodimer; with Gyc88E, in the presence of magnesium or manganese. Heme is required as a cofactor. In terms of tissue distribution, expressed in embryos in a segmental pattern in the ventral nerve cord (VNC) and in the brain, beginning at stage 13 and continuing through to stage 17. Colocalized with Gyc-89Db in several peripheral neurons that innervate trachea, basiconical sensilla and the sensory cones in the posterior segments of the embryo. Expression in wandering 3rd instar larvae is most prominent in a small cluster of cells located in the anterior medial region of each brain lobe. In the VNC, expression is found in scattered cells both laterally and at the midline.

It localises to the cytoplasm. It catalyses the reaction GTP = 3',5'-cyclic GMP + diphosphate. Probably not activated by nitric oxide (NO). Heterodimer exhibits some stimulation, compounds (SIN-1 and two of the NONOates) that were ineffective at stimulating Gyc-88E homodimer did stimulate the heterodimer. In terms of biological role, heterodimers with Gyc88E are activated in response to changing oxygen concentrations, alerting flies to hypoxic environments. Under normal oxygen concentrations, oxygen binds to the heme group and results in low levels of guanylyl cyclase activity. When exposed to reduced oxygen concentrations, the oxygen dissociates from the heme group resulting in activation of the enzyme. The protein is Soluble guanylate cyclase 89Db of Drosophila melanogaster (Fruit fly).